A 162-amino-acid chain; its full sequence is Large ribosomal subunit protein eL24 (162 aa).

Disordered stretches follow at residues 64 to 83 (DIHAEAAKKRRRTTKKPYSR) and 117 to 162 (ERIK…GGKR). A compositionally biased stretch (basic residues) spans 71 to 81 (KKRRRTTKKPY). Positions 117-135 (ERIKKTKDEKKAKKAEVTK) are enriched in basic and acidic residues.

The protein belongs to the eukaryotic ribosomal protein eL24 family.

The protein localises to the cytoplasm. This Hordeum vulgare (Barley) protein is Large ribosomal subunit protein eL24 (RPL24).